Here is an 880-residue protein sequence, read N- to C-terminus: DNA mismatch repair protein MutS (880 aa).

635-642 (GPNMGGKS) is a binding site for ATP.

It belongs to the DNA mismatch repair MutS family.

In terms of biological role, this protein is involved in the repair of mismatches in DNA. It is possible that it carries out the mismatch recognition step. This protein has a weak ATPase activity. The polypeptide is DNA mismatch repair protein MutS (Nitrosomonas eutropha (strain DSM 101675 / C91 / Nm57)).